The sequence spans 146 residues: Snaclec coagulation factor IX/factor X-binding protein subunit B2 (146 aa).

Residues 1 to 23 (MGRLIFVSFGLLVVFLSLSGTAA) form the signal peptide. Cystine bridges form between Cys-25/Cys-36, Cys-53/Cys-142, and Cys-119/Cys-134. Positions 32–143 (YEGHCYKPFN…CRMMANFVCE (112 aa)) constitute a C-type lectin domain.

This sequence belongs to the snaclec family. As to quaternary structure, heterodimer of subunits A and B2; disulfide-linked. Expressed by the venom gland.

Its subcellular location is the secreted. Its function is as follows. Anticoagulant protein which binds to the gamma-carboxyglutamic acid-domain regions of factors IX (F9) and factor X (F10) in the presence of calcium with a 1 to 1 stoichiometry. This is Snaclec coagulation factor IX/factor X-binding protein subunit B2 from Trimeresurus stejnegeri (Chinese green tree viper).